Reading from the N-terminus, the 1782-residue chain is Signal-induced proliferation-associated 1-like protein 1 (1782 aa).

Disordered regions lie at residues 1–28 (MTSL…GAPK), 47–125 (GSSV…VSLN), and 140–171 (KNKT…RRIR). Basic and acidic residues predominate over residues 84 to 94 (PPRKENVKESS). A compositionally biased stretch (low complexity) spans 95 to 125 (RSSQEIETSSCLESLSSKGSPVSQGSSVSLN). Phosphoserine is present on residues S162, S187, S193, S208, S255, and S288. Residues 277–297 (EREKPLKRRSKSETGDSSIFR) are disordered. The Rap-GAP domain occupies 599–816 (LMKLDEQGLN…RTRQEYLKDL (218 aa)). The PDZ domain occupies 953–1031 (EMTLRRNGLG…VVIIPPHDDC (79 aa)). 2 disordered regions span residues 1069 to 1128 (QRNA…RLSP) and 1144 to 1213 (SQCR…SLAD). Residues S1078, S1087, S1116, S1127, S1149, S1170, and S1181 each carry the phosphoserine modification. Polar residues predominate over residues 1080 to 1093 (QVPSQLQSPMTSRL). The segment covering 1149 to 1159 (SPSNLSSSSET) has biased composition (low complexity). Over residues 1186-1205 (DRQNTQSDISGSGKSTPSWQ) the composition is skewed to polar residues. Residues S1234 and S1249 each carry the phosphoserine modification. Positions 1247–1285 (HLSPNKQGHSDSHYSSHSSSNTLSSNASSAHSDEKWYDG) are disordered. Residues 1261–1276 (SSHSSSNTLSSNASSA) are compositionally biased toward low complexity. The residue at position 1305 (S1305) is a Phosphoserine; by PLK2. The interval 1307–1342 (IDTASYGPSHGSTASLGASTSSPRSGPGKEKVAPLW) is disordered. Phosphothreonine; by PLK2 is present on T1309. Positions 1315–1328 (SHGSTASLGASTSS) are enriched in low complexity. At S1328 the chain carries Phosphoserine; by CDK5. The residue at position 1345 (S1345) is a Phosphoserine. Basic and acidic residues predominate over residues 1358 to 1368 (TEGHGMDRKAE). The tract at residues 1358-1454 (TEGHGMDRKA…SSSGPRTFYP (97 aa)) is disordered. A phosphoserine mark is found at S1369, S1370, S1391, S1410, and S1412. Residues 1378-1410 (KSQGGSSPLSRENSTFSINDAASHTSTMSSRHS) show a composition bias toward polar residues. Residues 1432-1447 (SSQLAPSFSSSSSSSS) are compositionally biased toward low complexity. 2 positions are modified to phosphoserine: S1507 and S1528. T1530 is modified (phosphothreonine). Residues S1533, S1544, S1547, S1564, and S1567 each carry the phosphoserine modification. Residue R1580 is modified to Asymmetric dimethylarginine. S1582, S1624, S1626, S1629, S1687, S1690, S1707, S1708, and S1712 each carry phosphoserine. The disordered stretch occupies residues 1625-1647 (ASDSSLTDIQETRRQPIPDPGLM). Residues 1713–1773 (PTLASKVDQL…ASDKLKKFTE (61 aa)) adopt a coiled-coil conformation.

Interacts with DLG4, PDLIM5, PDLIM7 and LZTS3. Interacts with the actin cytoskeleton. Interacts (via PDZ domain) with EPHA4 (via PDZ motif); controls neuronal morphology through regulation of the RAP1 (RAP1A or RAP1B) and RAP2 (RAP2A, RAP2B or RAP2C) GTPases. In terms of processing, ubiquitinated and degraded by the SCF(BTRC) following phosphorylation by PLK2. Post-translationally, phosphorylated at Ser-1328 by CDK5, creating a docking site for the POLO box domains of PLK2. Subsequently, PLK2 binds and phosphorylates SIPA1L1, leading to ubiquitination and degradation by the proteasome.

It localises to the cytoplasm. It is found in the cytoskeleton. The protein localises to the postsynaptic density. The protein resides in the synapse. Its subcellular location is the synaptosome. Functionally, stimulates the GTPase activity of RAP2A. Promotes reorganization of the actin cytoskeleton and recruits DLG4 to F-actin. Contributes to the regulation of dendritic spine morphogenesis. This Mus musculus (Mouse) protein is Signal-induced proliferation-associated 1-like protein 1 (Sipa1l1).